We begin with the raw amino-acid sequence, 415 residues long: Ornithine cyclodeaminase (415 aa).

NAD(+) contacts are provided by Asn-241, Ala-242, Asp-320, Thr-352, Leu-354, His-355, Asp-373, Asp-396, and Val-397.

It belongs to the AgrE/ArgZ ornithine cyclodeaminase family. It depends on NAD(+) as a cofactor.

The catalysed reaction is L-ornithine = L-proline + NH4(+). Its function is as follows. Catalyzes the conversion of ornithine to proline, with the release of ammonia. In Methanococcus maripaludis (strain DSM 14266 / JCM 13030 / NBRC 101832 / S2 / LL), this protein is Ornithine cyclodeaminase.